A 182-amino-acid chain; its full sequence is Hypoxanthine/guanine phosphoribosyltransferase (182 aa).

It belongs to the purine/pyrimidine phosphoribosyltransferase family. Archaeal HPRT subfamily. In terms of assembly, homodimer.

The protein resides in the cytoplasm. The enzyme catalyses IMP + diphosphate = hypoxanthine + 5-phospho-alpha-D-ribose 1-diphosphate. It catalyses the reaction GMP + diphosphate = guanine + 5-phospho-alpha-D-ribose 1-diphosphate. It functions in the pathway purine metabolism; IMP biosynthesis via salvage pathway; IMP from hypoxanthine: step 1/1. Functionally, catalyzes a salvage reaction resulting in the formation of IMP that is energically less costly than de novo synthesis. The polypeptide is Hypoxanthine/guanine phosphoribosyltransferase (Methanosphaerula palustris (strain ATCC BAA-1556 / DSM 19958 / E1-9c)).